Reading from the N-terminus, the 475-residue chain is 3-isopropylmalate dehydratase large subunit (475 aa).

[4Fe-4S] cluster is bound by residues Cys-347, Cys-407, and Cys-410. Positions Leu-418–Thr-442 are disordered.

This sequence belongs to the aconitase/IPM isomerase family. LeuC type 1 subfamily. As to quaternary structure, heterodimer of LeuC and LeuD. It depends on [4Fe-4S] cluster as a cofactor.

It catalyses the reaction (2R,3S)-3-isopropylmalate = (2S)-2-isopropylmalate. It functions in the pathway amino-acid biosynthesis; L-leucine biosynthesis; L-leucine from 3-methyl-2-oxobutanoate: step 2/4. Its function is as follows. Catalyzes the isomerization between 2-isopropylmalate and 3-isopropylmalate, via the formation of 2-isopropylmaleate. In Streptomyces griseus subsp. griseus (strain JCM 4626 / CBS 651.72 / NBRC 13350 / KCC S-0626 / ISP 5235), this protein is 3-isopropylmalate dehydratase large subunit.